The chain runs to 101 residues: NAD(P)H-quinone oxidoreductase subunit 4L, chloroplastic (101 aa).

A run of 3 helical transmembrane segments spans residues 2–22, 27–46, and 61–81; these read MLEH…YGLI, MVRA…MNLI, and IFSI…PAIV.

The protein belongs to the complex I subunit 4L family. As to quaternary structure, NDH is composed of at least 16 different subunits, 5 of which are encoded in the nucleus.

The protein resides in the plastid. The protein localises to the chloroplast thylakoid membrane. The catalysed reaction is a plastoquinone + NADH + (n+1) H(+)(in) = a plastoquinol + NAD(+) + n H(+)(out). It catalyses the reaction a plastoquinone + NADPH + (n+1) H(+)(in) = a plastoquinol + NADP(+) + n H(+)(out). Functionally, NDH shuttles electrons from NAD(P)H:plastoquinone, via FMN and iron-sulfur (Fe-S) centers, to quinones in the photosynthetic chain and possibly in a chloroplast respiratory chain. The immediate electron acceptor for the enzyme in this species is believed to be plastoquinone. Couples the redox reaction to proton translocation, and thus conserves the redox energy in a proton gradient. This is NAD(P)H-quinone oxidoreductase subunit 4L, chloroplastic from Drimys granadensis.